Here is a 492-residue protein sequence, read N- to C-terminus: Transcript termination protein OPG145 (492 aa).

In terms of domain architecture, Helicase ATP-binding spans 100–256 (MIELKRPLYI…NSIINIAKLS (157 aa)). 113–120 (LACGFGKT) contributes to the ATP binding site. A DEAH box motif is present at residues 206 to 209 (DESH).

The protein belongs to the helicase family. Poxviruses subfamily. As to quaternary structure, interacts with OPG087. Might be part of a transcription complex composed at least of OPG087, OPG110, and OPG145.

The protein localises to the virion. Its function is as follows. DNA helicase which seems to act as a postreplicative transcription termination factor. Involved in ATP-dependent release of nascent RNA. Forms a stable complex with single-stranded DNA, and to a lesser extent RNA. The polypeptide is Transcript termination protein OPG145 (OPG145) (Cynomys gunnisoni (Gunnison's prairie dog)).